Reading from the N-terminus, the 60-residue chain is Large ribosomal subunit protein uL30 (60 aa).

Belongs to the universal ribosomal protein uL30 family. As to quaternary structure, part of the 50S ribosomal subunit.

The chain is Large ribosomal subunit protein uL30 from Alcanivorax borkumensis (strain ATCC 700651 / DSM 11573 / NCIMB 13689 / SK2).